Consider the following 373-residue polypeptide: Probable tRNA sulfurtransferase (373 aa).

In terms of domain architecture, THUMP spans 54 to 158 (NKNIEELSKV…NDVAYFYHKI (105 aa)). Residues 176–177 (LF), 201–202 (NF), Lys-256, Gly-278, and Gln-287 contribute to the ATP site.

Belongs to the ThiI family.

The protein localises to the cytoplasm. The enzyme catalyses [ThiI sulfur-carrier protein]-S-sulfanyl-L-cysteine + a uridine in tRNA + 2 reduced [2Fe-2S]-[ferredoxin] + ATP + H(+) = [ThiI sulfur-carrier protein]-L-cysteine + a 4-thiouridine in tRNA + 2 oxidized [2Fe-2S]-[ferredoxin] + AMP + diphosphate. The catalysed reaction is [ThiS sulfur-carrier protein]-C-terminal Gly-Gly-AMP + S-sulfanyl-L-cysteinyl-[cysteine desulfurase] + AH2 = [ThiS sulfur-carrier protein]-C-terminal-Gly-aminoethanethioate + L-cysteinyl-[cysteine desulfurase] + A + AMP + 2 H(+). Its pathway is cofactor biosynthesis; thiamine diphosphate biosynthesis. Catalyzes the ATP-dependent transfer of a sulfur to tRNA to produce 4-thiouridine in position 8 of tRNAs, which functions as a near-UV photosensor. Also catalyzes the transfer of sulfur to the sulfur carrier protein ThiS, forming ThiS-thiocarboxylate. This is a step in the synthesis of thiazole, in the thiamine biosynthesis pathway. The sulfur is donated as persulfide by IscS. This is Probable tRNA sulfurtransferase from Saccharolobus islandicus (strain M.16.27) (Sulfolobus islandicus).